Here is a 367-residue protein sequence, read N- to C-terminus: Phosphoribosylaminoimidazole-succinocarboxamide synthase (367 aa).

Belongs to the SAICAR synthetase family.

It catalyses the reaction 5-amino-1-(5-phospho-D-ribosyl)imidazole-4-carboxylate + L-aspartate + ATP = (2S)-2-[5-amino-1-(5-phospho-beta-D-ribosyl)imidazole-4-carboxamido]succinate + ADP + phosphate + 2 H(+). The protein operates within purine metabolism; IMP biosynthesis via de novo pathway; 5-amino-1-(5-phospho-D-ribosyl)imidazole-4-carboxamide from 5-amino-1-(5-phospho-D-ribosyl)imidazole-4-carboxylate: step 1/2. This is Phosphoribosylaminoimidazole-succinocarboxamide synthase from Vibrio vulnificus (strain CMCP6).